Reading from the N-terminus, the 175-residue chain is O-acetyl-ADP-ribose deacetylase (175 aa).

The Macro domain maps to 1–175 (MAVQPEVILG…IYRRLLASYP (175 aa)). Residues 11–12 (DI), asparagine 25, 33–35 (GVD), and 122–126 (STGVY) contribute to the substrate site. Aspartate 35 (proton acceptor) is an active-site residue.

Belongs to the MacroD-type family. YmdB subfamily. In terms of assembly, homodimer. Interacts with RNase III.

It carries out the reaction 3''-O-acetyl-ADP-D-ribose + H2O = ADP-D-ribose + acetate + H(+). The enzyme catalyses 2''-O-acetyl-ADP-D-ribose + H2O = ADP-D-ribose + acetate + H(+). In terms of biological role, deacetylates O-acetyl-ADP ribose to yield ADP-ribose and free acetate. Down-regulates ribonuclease 3 (RNase III) activity. Acts by interacting directly with the region of the ribonuclease that is required for dimerization/activation. The polypeptide is O-acetyl-ADP-ribose deacetylase (Klebsiella pneumoniae (strain 342)).